We begin with the raw amino-acid sequence, 117 residues long: Iron-sulfur cluster insertion protein ErpA (117 aa).

Residues C45, C109, and C111 each contribute to the iron-sulfur cluster site.

It belongs to the HesB/IscA family. As to quaternary structure, homodimer. The cofactor is iron-sulfur cluster.

Its function is as follows. Required for insertion of 4Fe-4S clusters for at least IspG. The chain is Iron-sulfur cluster insertion protein ErpA from Chromohalobacter salexigens (strain ATCC BAA-138 / DSM 3043 / CIP 106854 / NCIMB 13768 / 1H11).